The primary structure comprises 384 residues: S-adenosylmethionine synthase (384 aa).

H15 contacts ATP. Position 17 (D17) interacts with Mg(2+). E43 contributes to the K(+) binding site. 2 residues coordinate L-methionine: E56 and Q99. The flexible loop stretch occupies residues 99–109 (QSPDINQGVDR). ATP is bound by residues 164–166 (DAK), 230–231 (RF), D239, 245–246 (RK), A262, and K266. D239 contacts L-methionine. K270 provides a ligand contact to L-methionine.

The protein belongs to the AdoMet synthase family. In terms of assembly, homotetramer; dimer of dimers. Requires Mg(2+) as cofactor. K(+) serves as cofactor.

The protein localises to the cytoplasm. The catalysed reaction is L-methionine + ATP + H2O = S-adenosyl-L-methionine + phosphate + diphosphate. It participates in amino-acid biosynthesis; S-adenosyl-L-methionine biosynthesis; S-adenosyl-L-methionine from L-methionine: step 1/1. In terms of biological role, catalyzes the formation of S-adenosylmethionine (AdoMet) from methionine and ATP. The overall synthetic reaction is composed of two sequential steps, AdoMet formation and the subsequent tripolyphosphate hydrolysis which occurs prior to release of AdoMet from the enzyme. The protein is S-adenosylmethionine synthase of Enterobacter sp. (strain 638).